A 279-amino-acid polypeptide reads, in one-letter code: Orotidine 5'-phosphate decarboxylase (279 aa).

Substrate is bound by residues aspartate 8, lysine 30, 58 to 67, threonine 117, arginine 177, glutamine 186, glycine 206, and arginine 207; that span reads DLKFHDIPNT. Catalysis depends on lysine 60, which acts as the Proton donor.

It belongs to the OMP decarboxylase family. Type 1 subfamily. As to quaternary structure, homodimer.

It catalyses the reaction orotidine 5'-phosphate + H(+) = UMP + CO2. Its pathway is pyrimidine metabolism; UMP biosynthesis via de novo pathway; UMP from orotate: step 2/2. In terms of biological role, catalyzes the decarboxylation of orotidine 5'-monophosphate (OMP) to uridine 5'-monophosphate (UMP). This Campylobacter jejuni subsp. jejuni serotype O:2 (strain ATCC 700819 / NCTC 11168) protein is Orotidine 5'-phosphate decarboxylase.